Reading from the N-terminus, the 324-residue chain is Leucine carboxyl methyltransferase 1 (324 aa).

S-adenosyl-L-methionine is bound by residues Arg74, Gly101, Asp128, 172–173 (DL), and Glu196.

The protein belongs to the methyltransferase superfamily. LCMT family.

It catalyses the reaction [phosphatase 2A protein]-C-terminal L-leucine + S-adenosyl-L-methionine = [phosphatase 2A protein]-C-terminal L-leucine methyl ester + S-adenosyl-L-homocysteine. Its function is as follows. Methylates the carboxyl group of the C-terminal leucine residue of protein phosphatase 2A catalytic subunits to form alpha-leucine ester residues. The sequence is that of Leucine carboxyl methyltransferase 1 (PPM1) from Yarrowia lipolytica (strain CLIB 122 / E 150) (Yeast).